The chain runs to 474 residues: Coiled-coil domain-containing protein 149 (474 aa).

Coiled-coil stretches lie at residues Met-1 to Ser-199 and Ile-259 to Ser-286. Disordered stretches follow at residues Ser-301–Val-388 and Ala-405–Thr-474. Residues Thr-323–Gln-337 show a composition bias toward basic and acidic residues. Residues Cys-343–Glu-353 show a composition bias toward low complexity. The stretch at Glu-385–Ser-414 forms a coiled coil.

This sequence belongs to the CCDC149 family.

The chain is Coiled-coil domain-containing protein 149 (CCDC149) from Homo sapiens (Human).